A 333-amino-acid chain; its full sequence is Anthranilate phosphoribosyltransferase (333 aa).

5-phospho-alpha-D-ribose 1-diphosphate-binding positions include glycine 78, 81–82, threonine 86, 88–91, 106–114, and serine 118; these read GD, NVST, and KHGNYSVSS. Glycine 78 is a binding site for anthranilate. Serine 90 contacts Mg(2+). Asparagine 109 serves as a coordination point for anthranilate. Anthranilate is bound at residue arginine 164. Aspartate 222 and glutamate 223 together coordinate Mg(2+).

It belongs to the anthranilate phosphoribosyltransferase family. Homodimer. It depends on Mg(2+) as a cofactor.

The enzyme catalyses N-(5-phospho-beta-D-ribosyl)anthranilate + diphosphate = 5-phospho-alpha-D-ribose 1-diphosphate + anthranilate. It functions in the pathway amino-acid biosynthesis; L-tryptophan biosynthesis; L-tryptophan from chorismate: step 2/5. Functionally, catalyzes the transfer of the phosphoribosyl group of 5-phosphorylribose-1-pyrophosphate (PRPP) to anthranilate to yield N-(5'-phosphoribosyl)-anthranilate (PRA). This is Anthranilate phosphoribosyltransferase from Natronomonas pharaonis (strain ATCC 35678 / DSM 2160 / CIP 103997 / JCM 8858 / NBRC 14720 / NCIMB 2260 / Gabara) (Halobacterium pharaonis).